A 144-amino-acid polypeptide reads, in one-letter code: Cytochrome c oxidase subunit 4 isoform 1, mitochondrial (144 aa).

The Mitochondrial matrix segment spans residues 1–73 (SVVKSEDYAL…SFAEMNRGSN (73 aa)). K4 is subject to N6-acetyllysine; alternate. Position 4 is an N6-succinyllysine; alternate (K4). 2 positions are modified to phosphoserine: S31 and S33. K35 carries the post-translational modification N6-acetyllysine; alternate. At K35 the chain carries N6-succinyllysine; alternate. K42 bears the N6-acetyllysine mark. The chain crosses the membrane as a helical span at residues 74–99 (EWKTVVGAAMFFIGFTAILIILEKRY). Residues 100 to 144 (VYGPLPHTFDKEWVAMQTKRMLDLKVNPVDGLASKWDYDKKEWKK) lie on the Mitochondrial intermembrane side of the membrane.

The protein belongs to the cytochrome c oxidase IV family. In terms of assembly, component of the cytochrome c oxidase (complex IV, CIV), a multisubunit enzyme composed of 14 subunits. The complex is composed of a catalytic core of 3 subunits MT-CO1, MT-CO2 and MT-CO3, encoded in the mitochondrial DNA, and 11 supernumerary subunits COX4I, COX5A, COX5B, COX6A, COX6B, COX6C, COX7A, COX7B, COX7C, COX8 and NDUFA4, which are encoded in the nuclear genome. The complex exists as a monomer or a dimer and forms supercomplexes (SCs) in the inner mitochondrial membrane with NADH-ubiquinone oxidoreductase (complex I, CI) and ubiquinol-cytochrome c oxidoreductase (cytochrome b-c1 complex, complex III, CIII), resulting in different assemblies (supercomplex SCI(1)III(2)IV(1) and megacomplex MCI(2)III(2)IV(2)). Interacts with PHB2; the interaction decreases in absence of SPHK2. Interacts with AFG1L. Interacts with ABCB7; this interaction allows the regulation of cellular iron homeostasis and cellular reactive oxygen species (ROS) levels in cardiomyocytes. Interacts with FLVCR2; this interaction occurs in the absence of heme and is disrupted upon heme binding. Interacts with IRGC.

It localises to the mitochondrion inner membrane. It functions in the pathway energy metabolism; oxidative phosphorylation. Its function is as follows. Component of the cytochrome c oxidase, the last enzyme in the mitochondrial electron transport chain which drives oxidative phosphorylation. The respiratory chain contains 3 multisubunit complexes succinate dehydrogenase (complex II, CII), ubiquinol-cytochrome c oxidoreductase (cytochrome b-c1 complex, complex III, CIII) and cytochrome c oxidase (complex IV, CIV), that cooperate to transfer electrons derived from NADH and succinate to molecular oxygen, creating an electrochemical gradient over the inner membrane that drives transmembrane transport and the ATP synthase. Cytochrome c oxidase is the component of the respiratory chain that catalyzes the reduction of oxygen to water. Electrons originating from reduced cytochrome c in the intermembrane space (IMS) are transferred via the dinuclear copper A center (CU(A)) of subunit 2 and heme A of subunit 1 to the active site in subunit 1, a binuclear center (BNC) formed by heme A3 and copper B (CU(B)). The BNC reduces molecular oxygen to 2 water molecules using 4 electrons from cytochrome c in the IMS and 4 protons from the mitochondrial matrix. The chain is Cytochrome c oxidase subunit 4 isoform 1, mitochondrial (COX4I1) from Aotus azarae (Azara's night monkey).